Reading from the N-terminus, the 137-residue chain is ATP synthase epsilon chain (137 aa).

Belongs to the ATPase epsilon chain family. As to quaternary structure, F-type ATPases have 2 components, CF(1) - the catalytic core - and CF(0) - the membrane proton channel. CF(1) has five subunits: alpha(3), beta(3), gamma(1), delta(1), epsilon(1). CF(0) has three main subunits: a, b and c.

The protein localises to the cell membrane. Produces ATP from ADP in the presence of a proton gradient across the membrane. In Caldicellulosiruptor bescii (strain ATCC BAA-1888 / DSM 6725 / KCTC 15123 / Z-1320) (Anaerocellum thermophilum), this protein is ATP synthase epsilon chain.